The following is a 480-amino-acid chain: MSKGTRDRKNIYVSPEEMARQQRFIDEIKELNYRKEVKTGKKKLYCLNTFGCQMNEHDSEKLAGMLAEMGYAETDNVNESDLVIYNTCCVRENAELKVYGHLGMLKPLKNQKPDLVIAVCGCMMQQPEVVEHIKKTYSHVDLIFGTHNLYKFPELLYSAMDSQTTVVDVWDCDGQIAENVAIERKDGVKAWVTVMYGCNNFCTYCIVPYVRGRERSRSMDDILEEVRMLGRQGFKEITLLGQNVNSYGKDIGDGTSFAELIREVNKIPGIERIRFTTSHPKDLSDDLIYAMRDCEKVCEHLHLPFQAGSTRILKLMNRKYTKEDYINLVAKIKENIPDIALTTDIIVGFPGETEEDFSDTLDILEKVRFDNAYTFLYSKRTGTPAAKMEDQVPEEVKKERFQRLLETQNRISKEINDTFLGKVVEVLVEGVSKTNDKIFTGRTRGNKVVNFEADASLIGKLVNVRINTVKTWSLEGSIVR.

In terms of domain architecture, MTTase N-terminal spans 43-161 (KLYCLNTFGC…FPELLYSAMD (119 aa)). Positions 52, 88, 122, 198, 202, and 205 each coordinate [4Fe-4S] cluster. In terms of domain architecture, Radical SAM core spans 184 to 414 (RKDGVKAWVT…LETQNRISKE (231 aa)). The TRAM domain maps to 417–480 (DTFLGKVVEV…TWSLEGSIVR (64 aa)).

Belongs to the methylthiotransferase family. MiaB subfamily. As to quaternary structure, monomer. The cofactor is [4Fe-4S] cluster.

It is found in the cytoplasm. It catalyses the reaction N(6)-dimethylallyladenosine(37) in tRNA + (sulfur carrier)-SH + AH2 + 2 S-adenosyl-L-methionine = 2-methylsulfanyl-N(6)-dimethylallyladenosine(37) in tRNA + (sulfur carrier)-H + 5'-deoxyadenosine + L-methionine + A + S-adenosyl-L-homocysteine + 2 H(+). Functionally, catalyzes the methylthiolation of N6-(dimethylallyl)adenosine (i(6)A), leading to the formation of 2-methylthio-N6-(dimethylallyl)adenosine (ms(2)i(6)A) at position 37 in tRNAs that read codons beginning with uridine. In Acetivibrio thermocellus (strain ATCC 27405 / DSM 1237 / JCM 9322 / NBRC 103400 / NCIMB 10682 / NRRL B-4536 / VPI 7372) (Clostridium thermocellum), this protein is tRNA-2-methylthio-N(6)-dimethylallyladenosine synthase.